The sequence spans 611 residues: Putative type II restriction enzyme HgiDII (611 aa).

The span at 355 to 364 (YPSNPKKEEV) shows a compositional bias: basic and acidic residues. Residues 355 to 434 (YPSNPKKEEV…PEPSPPPKQE (80 aa)) are disordered. A compositionally biased stretch (low complexity) spans 381-409 (TNASSDSSTATENASSDSSTATENASSET). Tandem repeats lie at residues 382–392 (NASSDSSTATE) and 393–403 (NASSDSSTATE). The 2.5 X 11 AA tandem repeats stretch occupies residues 382-403 (NASSDSSTATENASSDSSTATE). One copy of the 3; truncated repeat lies at 404 to 409 (NASSET). A compositionally biased stretch (acidic residues) spans 410–425 (NDGEVEDNSFFDDDIP).

The catalysed reaction is Endonucleolytic cleavage of DNA to give specific double-stranded fragments with terminal 5'-phosphates.. In terms of biological role, according to REBASE this is a P subtype restriction enzyme that recognizes the double-stranded sequence 5'-GTCGAC-3' and cleaves after G-1. No restriction activity was detected upon overexpressing this protein in E.coli. The protein is Putative type II restriction enzyme HgiDII of Herpetosiphon aurantiacus (Herpetosiphon giganteus).